The primary structure comprises 298 residues: Sulfate adenylyltransferase subunit 2 (298 aa).

Basic and acidic residues-rich tracts occupy residues 272 to 282 (RTSERQGRLID) and 289 to 298 (MEKKKQEGYF). A disordered region spans residues 272–298 (RTSERQGRLIDSDSAGSMEKKKQEGYF).

Belongs to the PAPS reductase family. CysD subfamily. Heterodimer composed of CysD, the smaller subunit, and CysN.

The enzyme catalyses sulfate + ATP + H(+) = adenosine 5'-phosphosulfate + diphosphate. Its pathway is sulfur metabolism; hydrogen sulfide biosynthesis; sulfite from sulfate: step 1/3. Functionally, with CysN forms the ATP sulfurylase (ATPS) that catalyzes the adenylation of sulfate producing adenosine 5'-phosphosulfate (APS) and diphosphate, the first enzymatic step in sulfur assimilation pathway. APS synthesis involves the formation of a high-energy phosphoric-sulfuric acid anhydride bond driven by GTP hydrolysis by CysN coupled to ATP hydrolysis by CysD. The sequence is that of Sulfate adenylyltransferase subunit 2 from Burkholderia lata (strain ATCC 17760 / DSM 23089 / LMG 22485 / NCIMB 9086 / R18194 / 383).